The following is a 465-amino-acid chain: Argininosuccinate lyase (465 aa).

It belongs to the lyase 1 family. Argininosuccinate lyase subfamily.

The protein resides in the cytoplasm. It carries out the reaction 2-(N(omega)-L-arginino)succinate = fumarate + L-arginine. It functions in the pathway amino-acid biosynthesis; L-arginine biosynthesis; L-arginine from L-ornithine and carbamoyl phosphate: step 3/3. This Clostridium botulinum (strain Alaska E43 / Type E3) protein is Argininosuccinate lyase.